Reading from the N-terminus, the 590-residue chain is Aspartate--tRNA(Asp/Asn) ligase (590 aa).

An L-aspartate-binding site is contributed by Glu175. The aspartate stretch occupies residues 199-202 (QQYK). 2 residues coordinate L-aspartate: Arg221 and His450. Position 221–223 (221–223 (RDE)) interacts with ATP. Glu484 contributes to the ATP binding site. Arg491 contacts L-aspartate. ATP is bound at residue 536–539 (GVDR).

This sequence belongs to the class-II aminoacyl-tRNA synthetase family. Type 1 subfamily. Homodimer.

It is found in the cytoplasm. The enzyme catalyses tRNA(Asx) + L-aspartate + ATP = L-aspartyl-tRNA(Asx) + AMP + diphosphate. Its function is as follows. Aspartyl-tRNA synthetase with relaxed tRNA specificity since it is able to aspartylate not only its cognate tRNA(Asp) but also tRNA(Asn). Reaction proceeds in two steps: L-aspartate is first activated by ATP to form Asp-AMP and then transferred to the acceptor end of tRNA(Asp/Asn). The chain is Aspartate--tRNA(Asp/Asn) ligase from Rhodopseudomonas palustris (strain BisA53).